Here is a 474-residue protein sequence, read N- to C-terminus: L-arabinose isomerase (474 aa).

Mn(2+)-binding residues include glutamate 306, glutamate 331, histidine 348, and histidine 447.

It belongs to the arabinose isomerase family. Requires Mn(2+) as cofactor.

The enzyme catalyses beta-L-arabinopyranose = L-ribulose. The protein operates within carbohydrate degradation; L-arabinose degradation via L-ribulose; D-xylulose 5-phosphate from L-arabinose (bacterial route): step 1/3. Its function is as follows. Catalyzes the conversion of L-arabinose to L-ribulose. The protein is L-arabinose isomerase of Leuconostoc mesenteroides subsp. mesenteroides (strain ATCC 8293 / DSM 20343 / BCRC 11652 / CCM 1803 / JCM 6124 / NCDO 523 / NBRC 100496 / NCIMB 8023 / NCTC 12954 / NRRL B-1118 / 37Y).